A 71-amino-acid chain; its full sequence is uncharacterized protein (71 aa).

Helical transmembrane passes span Phe9–Phe29 and Phe41–Leu61.

The protein localises to the membrane. This is an uncharacterized protein from Acheta domesticus (House cricket).